The chain runs to 107 residues: Insulin-like peptide 6 (107 aa).

Residues 1–33 (MVLKVPTSKVLLVLATLFAVAAMISSWMPQVAA) form the signal peptide. 3 disulfides stabilise this stretch: cysteine 48/cysteine 91, cysteine 60/cysteine 105, and cysteine 90/cysteine 96. Residues 67–76 (LGDVFPNSFG) constitute a propeptide, connecting peptide.

Belongs to the insulin family. In terms of assembly, heterodimer of a B chain and an A chain linked by two disulfide bonds. As to expression, expressed at a low level in the larval gut.

Its subcellular location is the secreted. Its function is as follows. Possible ligand of InR/insulin-like receptor. In Drosophila melanogaster (Fruit fly), this protein is Insulin-like peptide 6.